The chain runs to 1395 residues: uncharacterized protein (1395 aa).

An ATP-binding site is contributed by 89 to 96 (AYKKWGKS). Disordered regions lie at residues 146 to 166 (EEKIHKKLEGSPSPEAELSPP) and 205 to 391 (SSSS…MENR). 2 stretches are compositionally biased toward low complexity: residues 155 to 166 (GSPSPEAELSPP) and 205 to 222 (SSSSSSTAPPASTDTSSP). The span at 230 to 269 (EVTKERSSEVPTTVHEKTQSKSKNEKENKFSNGTIEEKPA) shows a compositional bias: basic and acidic residues. Over residues 287–301 (SWSSGSSEAGSSSSG) the composition is skewed to low complexity. Residues 313-328 (VKVRHKAREIRNKKGR) are compositionally biased toward basic residues. The segment covering 337-346 (KHGEKAERNI) has biased composition (basic and acidic residues). Residues 349–358 (GSSSSSSSGS) are compositionally biased toward low complexity. Residues 369–391 (PLKEIGRKDPGSTEGKDLYMENR) are compositionally biased toward basic and acidic residues. Residues Ser814 and Ser1080 each carry the phosphoserine modification. Positions 1110 to 1132 (PISASELSPGGGSESEFESEKDE) are disordered. Phosphoserine occurs at positions 1194 and 1338. A compositionally biased stretch (basic and acidic residues) spans 1346-1359 (TGERDSGAKSDGFR). The segment at 1346–1395 (TGERDSGAKSDGFRGKMCSSASSTSEETGSEGGGEWVGPSEEELFSRTHL) is disordered.

This is an uncharacterized protein from Homo sapiens (Human).